A 232-amino-acid chain; its full sequence is Small ribosomal subunit protein uS5 (232 aa).

The disordered stretch occupies residues 1-47; the sequence is MAAEVTETAQPVETAASTDNNREQREPRRGGRERNPNRDRGNRDADK. Residues 7 to 19 show a composition bias toward polar residues; the sequence is ETAQPVETAASTD. The span at 20–47 shows a compositional bias: basic and acidic residues; it reads NNREQREPRRGGRERNPNRDRGNRDADK. The S5 DRBM domain maps to 50–113; that stretch reads FLERVVTINR…EEAKKNFFRV (64 aa).

It belongs to the universal ribosomal protein uS5 family. As to quaternary structure, part of the 30S ribosomal subunit. Contacts proteins S4 and S8.

Functionally, with S4 and S12 plays an important role in translational accuracy. In terms of biological role, located at the back of the 30S subunit body where it stabilizes the conformation of the head with respect to the body. The chain is Small ribosomal subunit protein uS5 from Leifsonia xyli subsp. xyli (strain CTCB07).